A 124-amino-acid polypeptide reads, in one-letter code: Small ribosomal subunit protein uS13 (124 aa).

The interval 95–124 (GLPVRGQRTKTNARTRKGPKRTIAGKKKAK) is disordered.

This sequence belongs to the universal ribosomal protein uS13 family. As to quaternary structure, part of the 30S ribosomal subunit. Forms a loose heterodimer with protein S19. Forms two bridges to the 50S subunit in the 70S ribosome.

Functionally, located at the top of the head of the 30S subunit, it contacts several helices of the 16S rRNA. In the 70S ribosome it contacts the 23S rRNA (bridge B1a) and protein L5 of the 50S subunit (bridge B1b), connecting the 2 subunits; these bridges are implicated in subunit movement. Contacts the tRNAs in the A and P-sites. In Rhodococcus erythropolis (strain PR4 / NBRC 100887), this protein is Small ribosomal subunit protein uS13.